The following is a 208-amino-acid chain: Thymidylate kinase (208 aa).

10-17 (GPEGSGKT) contacts ATP.

The protein belongs to the thymidylate kinase family.

It carries out the reaction dTMP + ATP = dTDP + ADP. Functionally, phosphorylation of dTMP to form dTDP in both de novo and salvage pathways of dTTP synthesis. The protein is Thymidylate kinase of Bacillus cereus (strain B4264).